Reading from the N-terminus, the 877-residue chain is Valine--tRNA ligase (877 aa).

Positions 46 to 56 match the 'HIGH' region motif; the sequence is PYPTGSIHMGH. Residues 529–533 carry the 'KMSKS' region motif; the sequence is KMSKS. ATP is bound at residue Lys532.

Belongs to the class-I aminoacyl-tRNA synthetase family. ValS type 2 subfamily.

Its subcellular location is the cytoplasm. The enzyme catalyses tRNA(Val) + L-valine + ATP = L-valyl-tRNA(Val) + AMP + diphosphate. In terms of biological role, catalyzes the attachment of valine to tRNA(Val). As ValRS can inadvertently accommodate and process structurally similar amino acids such as threonine, to avoid such errors, it has a 'posttransfer' editing activity that hydrolyzes mischarged Thr-tRNA(Val) in a tRNA-dependent manner. In Methanothermobacter thermautotrophicus (strain ATCC 29096 / DSM 1053 / JCM 10044 / NBRC 100330 / Delta H) (Methanobacterium thermoautotrophicum), this protein is Valine--tRNA ligase.